A 97-amino-acid chain; its full sequence is Small ribosomal subunit protein uS19 (97 aa).

Belongs to the universal ribosomal protein uS19 family.

Functionally, protein S19 forms a complex with S13 that binds strongly to the 16S ribosomal RNA. This Salinibacter ruber (strain DSM 13855 / M31) protein is Small ribosomal subunit protein uS19.